The primary structure comprises 150 residues: MPGPAETQAATLAKFIEGWKTFTPEAWTETWTDDCTQNFLPFTMGVPPRTKPEVLKLLPSLLGVLHNYKLEIYSVLHDASKGKAAIYATSFADTPFGDFKWTNEYAVFLTFSEDGTQVSKLEEMVDTAFYKEFFPKFQKYMIEKGAPANH.

The protein belongs to the avfA family.

It participates in secondary metabolite biosynthesis. Functionally, monooxygenase; part of the gene cluster that mediates the biosynthesis of the dimeric xanthones cryptosporioptides. The pathway begins with the synthesis of atrochrysone thioester by the polyketide synthase dmx-nrPKS. The atrochrysone carboxyl ACP thioesterase dmxR1 then breaks the thioester bond and releases the atrochrysone carboxylic acid from dmx-nrPKS. Atrochrysone carboxylic acid is decarboxylated by the decarboxylase dmxR15, and oxidized by the anthrone oxygenase dmxR16 to yield emodin. Emodin is then reduced to emodin hydroquinone by the oxidoreductase dmxR7. A-ring reduction by the short chain dehydrogenase dmxR18, dehydration by the scytalone dehydratase-like protein dmxR17 and probable spontaneous re-oxidation, results in overall deoxygenation to chrysophanol. Baeyer-Villiger oxidation by the Baeyer-Villiger monooxygenase (BVMO) dmxR6 then yields monodictylactone in equilibrium with monodictyphenone. In the case of the cryptosporioptides biosynthesis, monodictylactone is reduced at C-12 to an alcohol (by the short chain dehydrogenases dmxR12 or dmxR8) and hydroxylated at C-5 by dmxR9, yielding the electron-rich aromatic which could eliminate H(2)O to form the ortho-quinonemethide, followed by tautomerisation to paraquinone and complete the formal reduction to produce the 10-methylgroup. Conjugate addition of C-4a-OH to the resulting paraquinone by the monooxygenase dmxR10 then gives cyclohexadienone, which is then reduced at C-5 by the short chain dehydrogenase dmxR3 to give the dihydroxanthone. The 6,7-epoxide in the cryptosporioptides could be introduced by the cytochrome P450 monooxygenase dmxL3. The highly reducing PKS dmxL2 manufactures butyrate, which is further carboxylated by dmxL1 to form ethylmalonate. It is not yet clear whether the carboxylation occurs while the butyrate is attached to the ACP of dmxL2, but this unusual fungal metabolite could then be esterified to O-5 by the O-acetyltransferase dmxR13. Finally, dimerization performed by dmxR5 gives the observed dimers cryptosporioptides A, B and C as the final products of the pathway. This chain is Monooxygenase dmxR10, found in Cryptosporiopsis sp. (strain 8999).